The chain runs to 260 residues: UPF0246 protein BTH_I1090 (260 aa).

The protein belongs to the UPF0246 family.

The chain is UPF0246 protein BTH_I1090 from Burkholderia thailandensis (strain ATCC 700388 / DSM 13276 / CCUG 48851 / CIP 106301 / E264).